The primary structure comprises 453 residues: Probable glucan endo-1,3-beta-glucosidase eglC (453 aa).

Positions 1-18 (MQTRQLLALALAVAATEA) are cleaved as a signal peptide. E128 functions as the Proton donor in the catalytic mechanism. N183 carries N-linked (GlcNAc...) asparagine glycosylation. E239 acts as the Nucleophile in catalysis. N-linked (GlcNAc...) asparagine glycosylation is found at N364, N368, and N376. Residues 370–380 (TYPGSWNSTRP) are compositionally biased toward polar residues. The segment at 370-423 (TYPGSWNSTRPGANGGSSGSSGSSGSSGSSGSSGSSGSGASGHSSSTGSSSFPS) is disordered. Composition is skewed to low complexity over residues 389–402 (SSGS…SGSS) and 410–423 (SGHS…SFPS). Residue N430 is the site of GPI-anchor amidated asparagine attachment. A propeptide spans 431–453 (SASGLSGSLFGAVAAVFVALAAL) (removed in mature form).

This sequence belongs to the glycosyl hydrolase 17 family. In terms of processing, the GPI-anchor is attached to the protein in the endoplasmic reticulum and serves to target the protein to the cell surface. There, the glucosamine-inositol phospholipid moiety is cleaved off and the GPI-modified mannoprotein is covalently attached via its lipidless GPI glycan remnant to the 1,6-beta-glucan of the outer cell wall layer.

The protein resides in the cell membrane. Its subcellular location is the secreted. It is found in the cell wall. It catalyses the reaction Hydrolysis of (1-&gt;3)-beta-D-glucosidic linkages in (1-&gt;3)-beta-D-glucans.. Its function is as follows. Glucanases play a role in cell expansion during growth, in cell-cell fusion during mating, and in spore release during sporulation. This enzyme may be involved in beta-glucan degradation and also function biosynthetically as a transglycosylase. In Aspergillus clavatus (strain ATCC 1007 / CBS 513.65 / DSM 816 / NCTC 3887 / NRRL 1 / QM 1276 / 107), this protein is Probable glucan endo-1,3-beta-glucosidase eglC (eglC).